The primary structure comprises 102 residues: Protein GOLVEN 4 (102 aa).

The first 27 residues, 1–27 (MEMKKWSYANLITLALLFLFFIILLLA), serve as a signal peptide directing secretion. Residues 28 to 89 (FQGGSRDDDH…QEREVYVELR (62 aa)) constitute a propeptide that is removed on maturation. The tract at residues 56-78 (KSLKPINPTKKNGFEYPDQGSHD) is disordered. Y91 is subject to Sulfotyrosine. The residue at position 99 (P99) is a Hydroxyproline.

The protein belongs to the RGF family. As to quaternary structure, binds to LRR receptor-like serine/threonine-protein kinases to trigger their dimerization with SERK proteins and subsequent signaling. In terms of tissue distribution, expressed in roots and sepals.

Its subcellular location is the secreted. Functionally, signaling peptide (root growth factor) that promotes root hairs formation and growth. Maintains the postembryonic root stem cell niche. Regulates the pattern of root growth and lateral root development by modulating the length and the number of cortical cells in the root apical meristem (RAM), and the anticlinal asymmetric cell divisions in lateral root initiation cells. The chain is Protein GOLVEN 4 from Arabidopsis thaliana (Mouse-ear cress).